The primary structure comprises 477 residues: Calcium/calmodulin-dependent protein kinase type 1G (477 aa).

In terms of domain architecture, Protein kinase spans 23-277 (FIFMEVLGSG…CEKALRHPWI (255 aa)). Residues 29 to 37 (LGSGAFSEV) and Lys-52 contribute to the ATP site. The active-site Proton acceptor is the Asp-143. Residues 277 to 317 (IDGNTALHRDIYPSVSLQIQKNFAKSKWRQAFNAAAVVHHM) form an autoinhibitory domain region. A calmodulin-binding region spans residues 297 to 318 (KNFAKSKWRQAFNAAAVVHHMR). Positions 326–388 (SPSVRQEVEN…SRPSAPSGGR (63 aa)) are disordered. Positions 376–388 (SHSSRPSAPSGGR) are enriched in low complexity.

The protein belongs to the protein kinase superfamily. CAMK Ser/Thr protein kinase family. CaMK subfamily. May be prenylated on Cys-474. As to expression, highly expressed in brain, in neuronal cell bodies of the central nucleus of amygdala and ventromedial hypothalamic nucleus. Also detected in heart, testis, and kidney.

It localises to the cytoplasm. The protein localises to the golgi apparatus membrane. The protein resides in the cell membrane. The enzyme catalyses L-seryl-[protein] + ATP = O-phospho-L-seryl-[protein] + ADP + H(+). The catalysed reaction is L-threonyl-[protein] + ATP = O-phospho-L-threonyl-[protein] + ADP + H(+). Activated by Ca(2+)/calmodulin. Binding of calmodulin is thought to result in a conformational change and leads to activation through phosphorylation by CAMKK1. Functionally, calcium/calmodulin-dependent protein kinase belonging to a proposed calcium-triggered signaling cascade. In vitro phosphorylates transcription factor CREB1. This is Calcium/calmodulin-dependent protein kinase type 1G (Camk1g) from Mus musculus (Mouse).